The chain runs to 396 residues: Ornithine aminotransferase 2 (396 aa).

K255 is modified (N6-(pyridoxal phosphate)lysine).

It belongs to the class-III pyridoxal-phosphate-dependent aminotransferase family. OAT subfamily. Requires pyridoxal 5'-phosphate as cofactor.

Its subcellular location is the cytoplasm. The catalysed reaction is a 2-oxocarboxylate + L-ornithine = L-glutamate 5-semialdehyde + an L-alpha-amino acid. It participates in amino-acid biosynthesis; L-proline biosynthesis; L-glutamate 5-semialdehyde from L-ornithine: step 1/1. Catalyzes the interconversion of ornithine to glutamate semialdehyde. The sequence is that of Ornithine aminotransferase 2 from Staphylococcus saprophyticus subsp. saprophyticus (strain ATCC 15305 / DSM 20229 / NCIMB 8711 / NCTC 7292 / S-41).